A 178-amino-acid chain; its full sequence is Transcriptional repressor NrdR (178 aa).

A disordered region spans residues 1–21 (MRCPFCGHEDTQVKDSRPHED). The segment at 3–34 (CPFCGHEDTQVKDSRPHEDGAAIRRRRICAAC) is a zinc-finger region. Residues 7–21 (GHEDTQVKDSRPHED) show a composition bias toward basic and acidic residues. The 91-residue stretch at 49-139 (LYVVKADDRR…VHWDFRETKD (91 aa)) folds into the ATP-cone domain.

Belongs to the NrdR family. Zn(2+) serves as cofactor.

In terms of biological role, negatively regulates transcription of bacterial ribonucleotide reductase nrd genes and operons by binding to NrdR-boxes. The sequence is that of Transcriptional repressor NrdR from Gluconacetobacter diazotrophicus (strain ATCC 49037 / DSM 5601 / CCUG 37298 / CIP 103539 / LMG 7603 / PAl5).